Here is a 97-residue protein sequence, read N- to C-terminus: Osteocalcin (97 aa).

The first 20 residues, 1–20 (MKAAALLLLAALLTFSLCRS), serve as a signal peptide directing secretion. Positions 21–48 (APDGSDARSAKAFISHRQRAEMVRRQKR) are excised as a propeptide. The region spanning 49–95 (HYAQDSGVAGAPPNPLEAQREVCELSPDCDELADQIGFQEAYRRFYG) is the Gla domain. Residues Glu-65, Glu-69, Glu-72, and Asp-78 each coordinate Ca(2+). A 4-carboxyglutamate mark is found at Glu-65, Glu-69, and Glu-72. Cys-71 and Cys-77 are disulfide-bonded.

It belongs to the osteocalcin/matrix Gla protein family. In terms of processing, gamma-carboxyglutamate residues are formed by vitamin K dependent carboxylation by GGCX. These residues are essential for the binding of calcium.

Its subcellular location is the secreted. Its function is as follows. The carboxylated form is one of the main organic components of the bone matrix, which constitutes 1-2% of the total bone protein. The carboxylated form binds strongly to apatite and calcium. This chain is Osteocalcin (BGLAP), found in Gallus gallus (Chicken).